A 116-amino-acid chain; its full sequence is Cocaine- and amphetamine-regulated transcript protein (116 aa).

An N-terminal signal peptide occupies residues 1-27 (MESPRLRLLPLLGAALLLLLPLLGALA). The residue at position 41 (Tyr-41) is a Phosphotyrosine. Ser-48 carries the post-translational modification Phosphoserine. Cystine bridges form between Cys-82–Cys-100, Cys-88–Cys-108, and Cys-102–Cys-115.

The protein belongs to the CART family.

The protein localises to the secreted. Functionally, satiety factor closely associated with the actions of leptin and neuropeptide y; this anorectic peptide inhibits both normal and starvation-induced feeding and completely blocks the feeding response induced by neuropeptide Y and regulated by leptin in the hypothalamus. The sequence is that of Cocaine- and amphetamine-regulated transcript protein (CARTPT) from Bos taurus (Bovine).